The following is a 345-amino-acid chain: S-adenosylmethionine:tRNA ribosyltransferase-isomerase (345 aa).

The protein belongs to the QueA family. In terms of assembly, monomer.

The protein localises to the cytoplasm. It carries out the reaction 7-aminomethyl-7-carbaguanosine(34) in tRNA + S-adenosyl-L-methionine = epoxyqueuosine(34) in tRNA + adenine + L-methionine + 2 H(+). The protein operates within tRNA modification; tRNA-queuosine biosynthesis. In terms of biological role, transfers and isomerizes the ribose moiety from AdoMet to the 7-aminomethyl group of 7-deazaguanine (preQ1-tRNA) to give epoxyqueuosine (oQ-tRNA). This is S-adenosylmethionine:tRNA ribosyltransferase-isomerase from Thermus thermophilus (strain ATCC BAA-163 / DSM 7039 / HB27).